A 652-amino-acid polypeptide reads, in one-letter code: ATP-dependent zinc metalloprotease FtsH 2 (652 aa).

The Cytoplasmic portion of the chain corresponds to 1 to 6 (MNKYRR). Residues 7–27 (GLALGALALAVFILIGVGISM) form a helical membrane-spanning segment. Topologically, residues 28 to 108 (RATPQPVNLT…PAGNGAISAD (81 aa)) are extracellular. A helical transmembrane segment spans residues 109 to 129 (LMLLLRILTIVAVGVVIFVLF). At 130–652 (RRFGPSSIGT…RAAKPQIDRT (523 aa)) the chain is on the cytoplasmic side. An ATP-binding site is contributed by 200 to 207 (GPPGTGKT). H420 serves as a coordination point for Zn(2+). E421 is an active-site residue. The Zn(2+) site is built by H424 and D496.

The protein in the central section; belongs to the AAA ATPase family. In the C-terminal section; belongs to the peptidase M41 family. As to quaternary structure, homohexamer. Requires Zn(2+) as cofactor.

Its subcellular location is the cell membrane. Its function is as follows. Acts as a processive, ATP-dependent zinc metallopeptidase for both cytoplasmic and membrane proteins. Plays a role in the quality control of integral membrane proteins. This is ATP-dependent zinc metalloprotease FtsH 2 from Sphaerobacter thermophilus (strain ATCC 49802 / DSM 20745 / KCCM 41009 / NCIMB 13125 / S 6022).